We begin with the raw amino-acid sequence, 130 residues long: S-adenosylmethionine decarboxylase proenzyme (130 aa).

Catalysis depends on Ser-64, which acts as the Schiff-base intermediate with substrate; via pyruvic acid. Ser-64 is subject to Pyruvic acid (Ser); by autocatalysis. The active-site Proton acceptor; for processing activity is His-69. Cys-84 acts as the Proton donor; for catalytic activity in catalysis.

It belongs to the prokaryotic AdoMetDC family. Type 1 subfamily. As to quaternary structure, heterotetramer of two alpha and two beta chains arranged as a dimer of alpha/beta heterodimers. The cofactor is pyruvate. In terms of processing, is synthesized initially as an inactive proenzyme. Formation of the active enzyme involves a self-maturation process in which the active site pyruvoyl group is generated from an internal serine residue via an autocatalytic post-translational modification. Two non-identical subunits are generated from the proenzyme in this reaction, and the pyruvate is formed at the N-terminus of the alpha chain, which is derived from the carboxyl end of the proenzyme. The post-translation cleavage follows an unusual pathway, termed non-hydrolytic serinolysis, in which the side chain hydroxyl group of the serine supplies its oxygen atom to form the C-terminus of the beta chain, while the remainder of the serine residue undergoes an oxidative deamination to produce ammonia and the pyruvoyl group blocking the N-terminus of the alpha chain.

It catalyses the reaction S-adenosyl-L-methionine + H(+) = S-adenosyl 3-(methylsulfanyl)propylamine + CO2. It participates in amine and polyamine biosynthesis; S-adenosylmethioninamine biosynthesis; S-adenosylmethioninamine from S-adenosyl-L-methionine: step 1/1. Catalyzes the decarboxylation of S-adenosylmethionine to S-adenosylmethioninamine (dcAdoMet), the propylamine donor required for the synthesis of the polyamines spermine and spermidine from the diamine putrescine. The protein is S-adenosylmethionine decarboxylase proenzyme of Thermoplasma volcanium (strain ATCC 51530 / DSM 4299 / JCM 9571 / NBRC 15438 / GSS1).